The sequence spans 200 residues: Peroxiredoxin (200 aa).

The region spanning 6-166 (ARIGHLAPGF…ILRLVQAFQF (161 aa)) is the Thioredoxin domain. Residue Cys-52 is the Cysteine sulfenic acid (-SOH) intermediate of the active site.

This sequence belongs to the peroxiredoxin family. AhpC/Prx1 subfamily. As to quaternary structure, homodimer; disulfide-linked, upon oxidation.

The enzyme catalyses a hydroperoxide + [thioredoxin]-dithiol = an alcohol + [thioredoxin]-disulfide + H2O. Its function is as follows. Thiol-specific peroxidase that catalyzes the reduction of hydrogen peroxide and organic hydroperoxides to water and alcohols, respectively. Plays a role in cell protection against oxidative stress by detoxifying peroxides and as sensor of hydrogen peroxide-mediated signaling events. This chain is Peroxiredoxin, found in Oncorhynchus mykiss (Rainbow trout).